Here is a 379-residue protein sequence, read N- to C-terminus: Homoserine O-succinyltransferase (379 aa).

An AB hydrolase-1 domain is found at 48–357 (NAVLICHALS…SAHGHDAFLM (310 aa)). Catalysis depends on Ser-154, which acts as the Nucleophile. Arg-224 is a binding site for substrate. Catalysis depends on residues Asp-319 and His-352. Asp-353 provides a ligand contact to substrate.

The protein belongs to the AB hydrolase superfamily. MetX family. In terms of assembly, homodimer.

The protein resides in the cytoplasm. The catalysed reaction is L-homoserine + succinyl-CoA = O-succinyl-L-homoserine + CoA. Its pathway is amino-acid biosynthesis; L-methionine biosynthesis via de novo pathway; O-succinyl-L-homoserine from L-homoserine: step 1/1. With respect to regulation, activity increases in the presence of MetW. Its function is as follows. Transfers a succinyl group from succinyl-CoA to L-homoserine, forming succinyl-L-homoserine. The protein is Homoserine O-succinyltransferase of Neisseria gonorrhoeae.